The chain runs to 268 residues: UPF0719 transmembrane protein aq_1349 (268 aa).

8 consecutive transmembrane segments (helical) span residues 5–24 (LIAL…LFFR), 37–59 (NLAL…YSVY), 69–91 (LYLI…IFLR), 104–126 (AGAG…ASFW), 130–152 (SFIL…LFIS), 173–195 (FSAS…GAIS), 210–232 (VLYF…FLLF), and 245–267 (NLSA…LAVM).

It belongs to the UPF0719 family.

It localises to the cell membrane. The polypeptide is UPF0719 transmembrane protein aq_1349 (Aquifex aeolicus (strain VF5)).